A 383-amino-acid chain; its full sequence is Acetylornithine deacetylase (383 aa).

Histidine 80 lines the Zn(2+) pocket. Aspartate 82 is a catalytic residue. A Zn(2+)-binding site is contributed by aspartate 112. Residue glutamate 144 is part of the active site. Residues glutamate 145, glutamate 169, and histidine 355 each contribute to the Zn(2+) site.

It belongs to the peptidase M20A family. ArgE subfamily. Homodimer. Requires Zn(2+) as cofactor. Co(2+) serves as cofactor. Glutathione is required as a cofactor.

The protein localises to the cytoplasm. It carries out the reaction N(2)-acetyl-L-ornithine + H2O = L-ornithine + acetate. Its pathway is amino-acid biosynthesis; L-arginine biosynthesis; L-ornithine from N(2)-acetyl-L-ornithine (linear): step 1/1. In terms of biological role, catalyzes the hydrolysis of the amide bond of N(2)-acetylated L-amino acids. Cleaves the acetyl group from N-acetyl-L-ornithine to form L-ornithine, an intermediate in L-arginine biosynthesis pathway, and a branchpoint in the synthesis of polyamines. In Edwardsiella ictaluri (strain 93-146), this protein is Acetylornithine deacetylase.